Here is a 166-residue protein sequence, read N- to C-terminus: Tegument protein UL55 homolog (166 aa).

This sequence belongs to the alphaherpesvirinae HHV-1 UL55 family.

It localises to the virion tegument. The protein localises to the host nucleus matrix. In Gallid herpesvirus 2 (strain Chicken/Md5/ATCC VR-987) (GaHV-2), this protein is Tegument protein UL55 homolog (MDV070).